The following is a 275-amino-acid chain: Uroplakin-3b (275 aa).

An N-terminal signal peptide occupies residues 1 to 26 (MVRTRWQPPLRALLLLVLVWLPQSLS). At 27 to 196 (LDLIAYVPQI…DTWPGRRSGC (170 aa)) the chain is on the lumenal side. A glycan (N-linked (GlcNAc...) asparagine) is linked at asparagine 77. Residues 197–217 (MIVITSILSALAGLLLLAFLA) form a helical membrane-spanning segment. Topologically, residues 218–275 (ASTTRFSSLWWPEEAPEQLRIGSFMGKRYMTHHIPPSEAATLPVGCEPGLDPLPSLSP) are cytoplasmic.

Belongs to the uroplakin-3 family. As to quaternary structure, heterodimer with uroplakin-1B (UPK1B). In terms of tissue distribution, expression is urothelium-specific.

Its subcellular location is the cell membrane. In terms of biological role, component of the asymmetric unit membrane (AUM); a highly specialized biomembrane elaborated by terminally differentiated urothelial cells. May play an important role in AUM-cytoskeleton interaction in terminally differentiated urothelial cells. It also contributes to the formation of urothelial glycocalyx which may play an important role in preventing bacterial adherence. This Mus musculus (Mouse) protein is Uroplakin-3b (Upk3b).